The chain runs to 302 residues: MLNFRSPETMPLVSLANAGVRRNGRWLVRGVDFSISRGEIVTLIGPNGSGKSTTAKTAIGVLKPDEGHVERLAGLKVGYVPQKLAVDWTLPLTVERLMTLTGPLKGREIEESLAATGMLHMAKAEVQHLSGGEFQRALLARAIARKPDLLVLDEPVQGVDFSGEIALYELIKQIRNRTGCGILLISHDLHIVMAETDTVVCLNGHVCCRGTPQVVSQSPEYLKLFGRRAAGALAVYSHHHDHTHLPDGRVLHADGSITESCFPGDGHHHHEEADNIHDHDPDCGCGHHARLQGYDGTEKRDA.

In terms of domain architecture, ABC transporter spans 13-228; sequence VSLANAGVRR…PEYLKLFGRR (216 aa). ATP is bound at residue 45–52; sequence GPNGSGKS.

Belongs to the ABC transporter superfamily. Zinc importer (TC 3.A.1.15.5) family. As to quaternary structure, the complex is composed of two ATP-binding proteins (ZnuC), two transmembrane proteins (ZnuB) and a solute-binding protein (ZnuA).

The protein localises to the cell inner membrane. The catalysed reaction is Zn(2+)(out) + ATP(in) + H2O(in) = Zn(2+)(in) + ADP(in) + phosphate(in) + H(+)(in). Functionally, part of the ABC transporter complex ZnuABC involved in zinc import. Responsible for energy coupling to the transport system. The sequence is that of Zinc import ATP-binding protein ZnuC from Rhizobium meliloti (strain 1021) (Ensifer meliloti).